Consider the following 219-residue polypeptide: tRNA (guanine-N(7)-)-methyltransferase (219 aa).

S-adenosyl-L-methionine is bound by residues E51, E76, D103, and D125. The active site involves D125. Residues K129, D161, and 199-202 each bind substrate; that span reads TRYE.

This sequence belongs to the class I-like SAM-binding methyltransferase superfamily. TrmB family.

It carries out the reaction guanosine(46) in tRNA + S-adenosyl-L-methionine = N(7)-methylguanosine(46) in tRNA + S-adenosyl-L-homocysteine. Its pathway is tRNA modification; N(7)-methylguanine-tRNA biosynthesis. In terms of biological role, catalyzes the formation of N(7)-methylguanine at position 46 (m7G46) in tRNA. The chain is tRNA (guanine-N(7)-)-methyltransferase from Hyphomonas neptunium (strain ATCC 15444).